The chain runs to 286 residues: Phosphatidylserine decarboxylase proenzyme (286 aa).

Active-site charge relay system; for autoendoproteolytic cleavage activity residues include D90, H147, and S252. S252 acts as the Schiff-base intermediate with substrate; via pyruvic acid; for decarboxylase activity in catalysis. Residue S252 is modified to Pyruvic acid (Ser); by autocatalysis.

Belongs to the phosphatidylserine decarboxylase family. PSD-B subfamily. Prokaryotic type I sub-subfamily. As to quaternary structure, heterodimer of a large membrane-associated beta subunit and a small pyruvoyl-containing alpha subunit. The cofactor is pyruvate. In terms of processing, is synthesized initially as an inactive proenzyme. Formation of the active enzyme involves a self-maturation process in which the active site pyruvoyl group is generated from an internal serine residue via an autocatalytic post-translational modification. Two non-identical subunits are generated from the proenzyme in this reaction, and the pyruvate is formed at the N-terminus of the alpha chain, which is derived from the carboxyl end of the proenzyme. The autoendoproteolytic cleavage occurs by a canonical serine protease mechanism, in which the side chain hydroxyl group of the serine supplies its oxygen atom to form the C-terminus of the beta chain, while the remainder of the serine residue undergoes an oxidative deamination to produce ammonia and the pyruvoyl prosthetic group on the alpha chain. During this reaction, the Ser that is part of the protease active site of the proenzyme becomes the pyruvoyl prosthetic group, which constitutes an essential element of the active site of the mature decarboxylase.

It is found in the cell membrane. It catalyses the reaction a 1,2-diacyl-sn-glycero-3-phospho-L-serine + H(+) = a 1,2-diacyl-sn-glycero-3-phosphoethanolamine + CO2. The protein operates within phospholipid metabolism; phosphatidylethanolamine biosynthesis; phosphatidylethanolamine from CDP-diacylglycerol: step 2/2. Catalyzes the formation of phosphatidylethanolamine (PtdEtn) from phosphatidylserine (PtdSer). This chain is Phosphatidylserine decarboxylase proenzyme, found in Pseudomonas fluorescens (strain Pf0-1).